Consider the following 483-residue polypeptide: Probable 4-aminobutyrate aminotransferase, mitochondrial (483 aa).

148-149 (GT) lines the pyridoxal 5'-phosphate pocket. A substrate-binding site is contributed by Arg-204. Lys-341 is subject to N6-(pyridoxal phosphate)lysine. Thr-365 is a pyridoxal 5'-phosphate binding site.

The protein belongs to the class-III pyridoxal-phosphate-dependent aminotransferase family. In terms of assembly, homodimer. Pyridoxal 5'-phosphate is required as a cofactor.

The protein resides in the mitochondrion matrix. It catalyses the reaction 4-aminobutanoate + 2-oxoglutarate = succinate semialdehyde + L-glutamate. The enzyme catalyses (S)-3-amino-2-methylpropanoate + 2-oxoglutarate = 2-methyl-3-oxopropanoate + L-glutamate. The chain is Probable 4-aminobutyrate aminotransferase, mitochondrial (gta-1) from Caenorhabditis elegans.